The sequence spans 324 residues: N-acetylmuramoyl-L-alanine amidase sle1 (324 aa).

An N-terminal signal peptide occupies residues 1–25 (MQKKYITAIIGTTALSALASTHAQA). LysM domains lie at 27–70 (TTHT…VLKV), 84–127 (TVYT…KLKV), and 147–190 (ATYT…KLKV). In terms of domain architecture, Peptidase C51 spans 200 to 324 (SNNTRSNGGY…YQVRNYKFIH (125 aa)).

It is found in the secreted. The protein resides in the cell surface. The enzyme catalyses Hydrolyzes the link between N-acetylmuramoyl residues and L-amino acid residues in certain cell-wall glycopeptides.. In terms of biological role, peptidoglycan hydrolase involved in the splitting of the septum during cell division. The chain is N-acetylmuramoyl-L-alanine amidase sle1 (sle1) from Staphylococcus epidermidis (strain ATCC 12228 / FDA PCI 1200).